The chain runs to 238 residues: 4-hydroxy-tetrahydrodipicolinate reductase (238 aa).

Position 12–17 (12–17) interacts with NAD(+); it reads GASGRM. Position 40 (Arg40) interacts with NADP(+). Residues 93-95 and 117-120 contribute to the NAD(+) site; these read GTT and ASNF. His149 (proton donor/acceptor) is an active-site residue. His150 serves as a coordination point for (S)-2,3,4,5-tetrahydrodipicolinate. Residue Lys153 is the Proton donor of the active site. Residue 159–160 coordinates (S)-2,3,4,5-tetrahydrodipicolinate; sequence GT.

The protein belongs to the DapB family.

It localises to the cytoplasm. The catalysed reaction is (S)-2,3,4,5-tetrahydrodipicolinate + NAD(+) + H2O = (2S,4S)-4-hydroxy-2,3,4,5-tetrahydrodipicolinate + NADH + H(+). It carries out the reaction (S)-2,3,4,5-tetrahydrodipicolinate + NADP(+) + H2O = (2S,4S)-4-hydroxy-2,3,4,5-tetrahydrodipicolinate + NADPH + H(+). It participates in amino-acid biosynthesis; L-lysine biosynthesis via DAP pathway; (S)-tetrahydrodipicolinate from L-aspartate: step 4/4. In terms of biological role, catalyzes the conversion of 4-hydroxy-tetrahydrodipicolinate (HTPA) to tetrahydrodipicolinate. In Xanthomonas campestris pv. campestris (strain 8004), this protein is 4-hydroxy-tetrahydrodipicolinate reductase.